A 225-amino-acid polypeptide reads, in one-letter code: UPF0758 protein BCE_4545 (225 aa).

The MPN domain maps to 103–225; the sequence is SIRSPEDCAT…FVSLKEKGHI (123 aa). Positions 174, 176, and 187 each coordinate Zn(2+). Residues 174–187 carry the JAMM motif motif; sequence HNHPSGDPAPSRED.

The protein belongs to the UPF0758 family.

In Bacillus cereus (strain ATCC 10987 / NRS 248), this protein is UPF0758 protein BCE_4545.